The chain runs to 160 residues: Dihydrofolate reductase (160 aa).

Residues 1-160 enclose the DHFR domain; it reads MVKAIWAMDQ…KVAYYHKIAR (160 aa). 5-7 is a substrate binding site; the sequence is IWA. NADP(+)-binding positions include 6–7 and 14–19; these read WA and IGNGNS. Substrate-binding residues include Glu27 and Arg32. 43–46 contacts NADP(+); that stretch reads GSAT. Arg57 lines the substrate pocket. NADP(+)-binding positions include 62–65 and 101–106; these read LTRN and CGGAQV. Ser120 serves as a coordination point for substrate.

The protein belongs to the dihydrofolate reductase family.

It catalyses the reaction (6S)-5,6,7,8-tetrahydrofolate + NADP(+) = 7,8-dihydrofolate + NADPH + H(+). It participates in cofactor biosynthesis; tetrahydrofolate biosynthesis; 5,6,7,8-tetrahydrofolate from 7,8-dihydrofolate: step 1/1. Key enzyme in folate metabolism. Catalyzes an essential reaction for de novo glycine and purine synthesis, and for DNA precursor synthesis. This Mycoplasma pneumoniae (strain ATCC 29342 / M129 / Subtype 1) (Mycoplasmoides pneumoniae) protein is Dihydrofolate reductase (folA).